Reading from the N-terminus, the 456-residue chain is Glutamyl-tRNA reductase (456 aa).

Substrate-binding positions include Thr49–Arg52, Ser109, Glu114–Gln116, and Gln120. The active-site Nucleophile is Cys50. NADP(+) is bound at residue Gly189–Gly194.

Belongs to the glutamyl-tRNA reductase family. Homodimer.

It carries out the reaction (S)-4-amino-5-oxopentanoate + tRNA(Glu) + NADP(+) = L-glutamyl-tRNA(Glu) + NADPH + H(+). It participates in porphyrin-containing compound metabolism; protoporphyrin-IX biosynthesis; 5-aminolevulinate from L-glutamyl-tRNA(Glu): step 1/2. Its function is as follows. Catalyzes the NADPH-dependent reduction of glutamyl-tRNA(Glu) to glutamate 1-semialdehyde (GSA). In Mycolicibacterium vanbaalenii (strain DSM 7251 / JCM 13017 / BCRC 16820 / KCTC 9966 / NRRL B-24157 / PYR-1) (Mycobacterium vanbaalenii), this protein is Glutamyl-tRNA reductase.